A 264-amino-acid chain; its full sequence is ATP synthase subunit a (264 aa).

Transmembrane regions (helical) follow at residues 29–49, 87–107, 134–154, 177–197, 208–228, and 235–255; these read TWHI…LWIF, NALI…MNFM, DVNI…YYSI, IPVN…SLAL, LIFI…SLGV, and LIFH…LTIV.

Belongs to the ATPase A chain family. In terms of assembly, F-type ATPases have 2 components, CF(1) - the catalytic core - and CF(0) - the membrane proton channel. CF(1) has five subunits: alpha(3), beta(3), gamma(1), delta(1), epsilon(1). CF(0) has three main subunits: a(1), b(2) and c(9-12). The alpha and beta chains form an alternating ring which encloses part of the gamma chain. CF(1) is attached to CF(0) by a central stalk formed by the gamma and epsilon chains, while a peripheral stalk is formed by the delta and b chains.

Its subcellular location is the cell inner membrane. Key component of the proton channel; it plays a direct role in the translocation of protons across the membrane. This Shewanella sp. (strain MR-4) protein is ATP synthase subunit a.